Reading from the N-terminus, the 428-residue chain is Serine--tRNA ligase (428 aa).

236 to 238 contacts L-serine; it reads TAE. Position 267-269 (267-269) interacts with ATP; sequence RSE. An L-serine-binding site is contributed by E290. Residue 354–357 coordinates ATP; that stretch reads EISS. S388 is a binding site for L-serine.

This sequence belongs to the class-II aminoacyl-tRNA synthetase family. Type-1 seryl-tRNA synthetase subfamily. As to quaternary structure, homodimer. The tRNA molecule binds across the dimer.

The protein resides in the cytoplasm. It catalyses the reaction tRNA(Ser) + L-serine + ATP = L-seryl-tRNA(Ser) + AMP + diphosphate + H(+). The catalysed reaction is tRNA(Sec) + L-serine + ATP = L-seryl-tRNA(Sec) + AMP + diphosphate + H(+). Its pathway is aminoacyl-tRNA biosynthesis; selenocysteinyl-tRNA(Sec) biosynthesis; L-seryl-tRNA(Sec) from L-serine and tRNA(Sec): step 1/1. Its function is as follows. Catalyzes the attachment of serine to tRNA(Ser). Is also able to aminoacylate tRNA(Sec) with serine, to form the misacylated tRNA L-seryl-tRNA(Sec), which will be further converted into selenocysteinyl-tRNA(Sec). This is Serine--tRNA ligase from Psychrobacter cryohalolentis (strain ATCC BAA-1226 / DSM 17306 / VKM B-2378 / K5).